Reading from the N-terminus, the 423-residue chain is Flavohemoprotein B (423 aa).

A Globin domain is found at 1–136; that stretch reads MLSQKSIQII…VAQAFMDAEE (136 aa). A heme b-binding site is contributed by His83. Catalysis depends on charge relay system residues Tyr93 and Glu135. A reductase region spans residues 149 to 423; the sequence is WKDTREFVVD…LRGVKNIIEN (275 aa). The region spanning 150-268 is the FAD-binding FR-type domain; that stretch reads KDTREFVVDR…SVPAGDFVVN (119 aa). FAD-binding positions include Tyr188 and 212–215; that span reads RHYS. 281–286 is an NADP(+) binding site; the sequence is GVGINP. 400 to 403 is a binding site for FAD; that stretch reads LFGP.

The protein belongs to the globin family. Two-domain flavohemoproteins subfamily. It in the C-terminal section; belongs to the flavoprotein pyridine nucleotide cytochrome reductase family. FAD serves as cofactor. It depends on heme b as a cofactor.

The protein localises to the cytoplasm. The catalysed reaction is 2 nitric oxide + NADPH + 2 O2 = 2 nitrate + NADP(+) + H(+). It carries out the reaction 2 nitric oxide + NADH + 2 O2 = 2 nitrate + NAD(+) + H(+). Is involved in NO detoxification in an aerobic process, termed nitric oxide dioxygenase (NOD) reaction that utilizes O(2) and NAD(P)H to convert NO to nitrate, which protects the cell from various noxious nitrogen compounds. Therefore, plays a central role in the inducible response to nitrosative stress. Its function is as follows. In the presence of oxygen and NADH, it has NADH oxidase activity, which leads to the generation of superoxide and H(2)O(2). Under anaerobic conditions, it also exhibits nitric oxide reductase and FAD reductase activities. However, all these reactions are much lower than NOD activity. This is Flavohemoprotein B (fhbB) from Dictyostelium discoideum (Social amoeba).